Consider the following 307-residue polypeptide: Protoheme IX farnesyltransferase (307 aa).

8 helical membrane passes run Met-32–Phe-52, Phe-65–Ile-85, Pro-108–Leu-128, Pro-131–Trp-151, Leu-158–Ile-178, Ile-186–Ala-206, Leu-251–Leu-271, and Phe-287–Phe-307.

This sequence belongs to the UbiA prenyltransferase family. Protoheme IX farnesyltransferase subfamily. Interacts with CtaA.

It localises to the cell membrane. The catalysed reaction is heme b + (2E,6E)-farnesyl diphosphate + H2O = Fe(II)-heme o + diphosphate. It participates in porphyrin-containing compound metabolism; heme O biosynthesis; heme O from protoheme: step 1/1. Functionally, converts heme B (protoheme IX) to heme O by substitution of the vinyl group on carbon 2 of heme B porphyrin ring with a hydroxyethyl farnesyl side group. This chain is Protoheme IX farnesyltransferase, found in Bacillus mycoides (strain KBAB4) (Bacillus weihenstephanensis).